Consider the following 446-residue polypeptide: Putrescine N-hydroxylase (446 aa).

Phe17, Asp37, Ser38, Lys39, Trp44, and His45 together coordinate FAD. Residues Thr54, Gln56, and Arg98 each coordinate NADP(+). Residue Gln56 participates in FAD binding. Val121 is an FAD binding site. NADP(+) contacts are provided by Ser199, Lys223, Tyr267, and Leu301. Residues Asn378, Pro389, and Leu391 each contribute to the FAD site.

The protein belongs to the lysine N(6)-hydroxylase/L-ornithine N(5)-oxygenase family. As to quaternary structure, homotetramer. It depends on FAD as a cofactor.

It catalyses the reaction putrescine + NADPH + O2 = N-hydroxyputrescine + NADP(+) + H2O. It functions in the pathway siderophore biosynthesis. Its function is as follows. N-hydroxylating monooxygenase involved in the biosynthesis of fimsbactin A, the major siderophore produced by A.baumannii. Catalyzes the N-hydroxylation of the aliphatic diamine putrescine into N-hydroxyputrescine (NHP). Putrescine is the preferred substrate, but the enzyme can also catalyze the N-hydroxylation of cadaverine, with 4-fold lower catalytic efficiency. Cannot use lysine or ornithine as substrates. Uses both NADPH and NADH as the reducing cofactor with a preference for NADPH. This chain is Putrescine N-hydroxylase, found in Acinetobacter baumannii (strain ATCC 17978 / DSM 105126 / CIP 53.77 / LMG 1025 / NCDC KC755 / 5377).